Consider the following 369-residue polypeptide: Putative protein FAM10A5 (369 aa).

The interval 38 to 98 is disordered; that stretch reads MGGKVPPATQ…IEPDTDAPQE (61 aa). Positions 49–73 are enriched in basic and acidic residues; that stretch reads AKSEENTKEEKPDSKKVEEDLKADE. Over residues 89-98 the composition is skewed to acidic residues; the sequence is IEPDTDAPQE. 3 TPR repeats span residues 114 to 147, 149 to 181, and 183 to 215; these read ANDK…NPRL, ILYA…NPDS, and QPYK…DYDE. The span at 256–272 shows a compositional bias: basic and acidic residues; it reads KAQEEQERAQREEEARR. The interval 256–300 is disordered; it reads KAQEEQERAQREEEARRQSGAHYGPFPGGFPGGMPGNFPGGMPGM. Over residues 281 to 300 the composition is skewed to gly residues; that stretch reads FPGGFPGGMPGNFPGGMPGM. Residues 319-358 enclose the STI1 domain; sequence DPEALAAMQDPEVMVAFQDVAQNPANMSKYQSNPKVMNLI. A Phosphoserine modification is found at S346. An N6-acetyllysine mark is found at K353 and K360.

It belongs to the FAM10 family.

Its subcellular location is the cytoplasm. The sequence is that of Putative protein FAM10A5 (ST13P5) from Homo sapiens (Human).